The following is a 902-amino-acid chain: Adhesion G-protein coupled receptor D1 (902 aa).

The N-terminal stretch at 1-25 (MKKLLPLCCWHSWLLLFYCDFQVRG) is a signal peptide. The Extracellular portion of the chain corresponds to 26–598 (AHTRSHVHPG…GHQVALSSIS (573 aa)). 15 N-linked (GlcNAc...) asparagine glycosylation sites follow: Asn68, Asn76, Asn83, Asn89, Asn121, Asn183, Asn217, Asn310, Asn330, Asn337, Asn347, Asn422, Asn504, Asn529, and Asn561. One can recognise a Pentraxin (PTX) domain in the interval 111 to 304 (KGVTFLYYRK…VNTMAPTNAY (194 aa)). In terms of domain architecture, GAIN-B spans 399–585 (QVAIVGSSSM…AILMQVVPLE (187 aa)). 2 cysteine pairs are disulfide-bonded: Cys538–Cys567 and Cys555–Cys569. The segment at 538-585 (CAFLDFSSGEGIWSNQGCALTEGNLSYSICRCTHLTNFAILMQVVPLE) is GPS. The tract at residues 574–582 (NFAILMQVV) is stachel. Gln591 contacts 17beta-hydroxy-5alpha-androstan-3-one. A helical transmembrane segment spans residues 599–619 (YIGCSLSVLCLAITLVTFAVL). Topologically, residues 620-630 (SSVSTIRNQRY) are cytoplasmic. The helical transmembrane segment at 631–651 (HIHANLSCAVLVAQVLLLISF) threads the bilayer. Residues 652 to 661 (RFEPGTAPCQ) are Extracellular-facing. Cys660 and Cys732 are oxidised to a cystine. Residues 662–682 (VLAMLLHYFFLSAFAWMLVEG) form a helical membrane-spanning segment. The Cytoplasmic portion of the chain corresponds to 683 to 702 (LHLYSMVIKVFGSEDSKHRY). A helical membrane pass occupies residues 703 to 723 (YYGIGWGFPLLICIISIVFAM). The Extracellular segment spans residues 724 to 739 (DSYGTSKNCWLSLGNG). Residues 740–760 (AIWAFVAPALFIIVVNIGILI) form a helical membrane-spanning segment. Residues 761 to 788 (AVTRVISQISAENYKIHGDPSAFKLTAK) lie on the Cytoplasmic side of the membrane. A helical membrane pass occupies residues 789-809 (AVAVLLPILGTSWVFGVLAVN). Topologically, residues 810 to 812 (NQA) are extracellular. Residues 813 to 833 (MVFQYMFAILNSLQGFFIFLF) form a helical membrane-spanning segment. At 834–902 (HCLLNSEVRA…SGHRVDLSAV (69 aa)) the chain is on the cytoplasmic side. The interval 865–902 (KPFSSDIMNGTRPATGSTRLSPWDKSSHSGHRVDLSAV) is disordered. Over residues 870–884 (DIMNGTRPATGSTRL) the composition is skewed to polar residues. Residues 889-902 (KSSHSGHRVDLSAV) are compositionally biased toward basic and acidic residues.

The protein belongs to the G-protein coupled receptor 2 family. Adhesion G-protein coupled receptor (ADGR) subfamily. As to quaternary structure, heterodimer of 2 chains generated by proteolytic processing; the large extracellular N-terminal fragment and the membrane-bound C-terminal fragment predominantly remain associated and non-covalently linked. Interacts with ESYT1; interaction takes place in absence of cytosolic calcium and inhibits the G protein-coupled receptor activity of ADGRD1. Post-translationally, autoproteolytically processed at the GPS region of the GAIN-B domain; this cleavage modulates receptor activity. Cleavage takes place early in the secretory pathway before N-glycosylation.

It localises to the cell membrane. With respect to regulation, forms a heterodimer of 2 chains generated by proteolytic processing that remain associated through non-covalent interactions mediated by the GAIN-B domain. In the inactivated receptor, the Stachel sequence (also named stalk) is embedded in the GAIN-B domain, where it adopts a beta-strand conformation. On activation, the Stachel moves into the 7 transmembrane region and adopts a twisted hook-shaped configuration that forms contacts within the receptor, leading to coupling of a G-alpha protein, which activates signaling. The cleaved GAIN-B and N-terminal domains can then dissociate from the rest of the receptor. Interaction with ESYT1 in absence of cytosolic calcium inhibits the G protein-coupled receptor activity; interaction and inhibition is relieved when cytosolic calcium increases. Its function is as follows. Adhesion G-protein coupled receptor (aGPCR) for androgen hormone 5alpha-dihydrotestosterone (5alpha-DHT), also named 17beta-hydroxy-5alpha-androstan-3-one, the most potent hormone among androgens. Also activated by methenolone drug. Ligand binding causes a conformation change that triggers signaling via guanine nucleotide-binding proteins (G proteins) and modulates the activity of downstream effectors, such as adenylate cyclase. ADGRD1 is coupled to G(s) G proteins and mediates activation of adenylate cyclase activity. Acts as a 5alpha-DHT receptor in muscle cells, thereby increasing intracellular cyclic AMP (cAMP) levels and enhancing muscle strength. In Bos taurus (Bovine), this protein is Adhesion G-protein coupled receptor D1 (ADGRD1).